Reading from the N-terminus, the 418-residue chain is AP-3 complex subunit mu-1 (418 aa).

Residues 176–417 enclose the MHD domain; the sequence is NNEAYFDVIE…ITKAGKFQVR (242 aa).

It belongs to the adaptor complexes medium subunit family. As to quaternary structure, the AP-3 complex associates with the BLOC-1 complex.

It localises to the golgi apparatus. Its subcellular location is the cytoplasmic vesicle membrane. Its function is as follows. Part of the AP-3 complex, an adaptor-related complex which is not clathrin-associated. The complex is associated with the Golgi region as well as more peripheral structures. It facilitates the budding of vesicles from the Golgi membrane and may be directly involved in trafficking to lysosomes. In concert with the BLOC-1 complex, AP-3 is required to target cargos into vesicles assembled at cell bodies for delivery into neurites and nerve terminals. This is AP-3 complex subunit mu-1 (AP3M1) from Gallus gallus (Chicken).